Here is a 123-residue protein sequence, read N- to C-terminus: Methylmalonyl-CoA carboxyltransferase 1.3S subunit (123 aa).

The 78-residue stretch at 46-123 folds into the Biotinyl-binding domain; the sequence is GAGAGKAGEG…QGGQGLIKIG (78 aa). At Lys89 the chain carries N6-biotinyllysine.

As to quaternary structure, transcarboxylase is composed of three subunits: 1.3S, 5S, and 12S. The core of the enzyme is composed of six 12S subunits. On each side of the core there are three pairs of 5S subunits. Each 5S dimer is attached to the core by two 1.3S subunits. Thus the total number of chains is 30 (6 + 12 + 12).

It catalyses the reaction (S)-methylmalonyl-CoA + pyruvate = propanoyl-CoA + oxaloacetate. Functionally, the biotinyl 1.3S subunit serves as a carboxyl carrier between the substrate-binding sites on the 12S and 5S subunits. In Propionibacterium freudenreichii subsp. shermanii, this protein is Methylmalonyl-CoA carboxyltransferase 1.3S subunit.